Consider the following 573-residue polypeptide: 2-succinyl-5-enolpyruvyl-6-hydroxy-3-cyclohexene-1-carboxylate synthase (573 aa).

Belongs to the TPP enzyme family. MenD subfamily. As to quaternary structure, homodimer. The cofactor is Mg(2+). Mn(2+) serves as cofactor. Thiamine diphosphate is required as a cofactor.

The catalysed reaction is isochorismate + 2-oxoglutarate + H(+) = 5-enolpyruvoyl-6-hydroxy-2-succinyl-cyclohex-3-ene-1-carboxylate + CO2. The protein operates within quinol/quinone metabolism; 1,4-dihydroxy-2-naphthoate biosynthesis; 1,4-dihydroxy-2-naphthoate from chorismate: step 2/7. It functions in the pathway quinol/quinone metabolism; menaquinone biosynthesis. In terms of biological role, catalyzes the thiamine diphosphate-dependent decarboxylation of 2-oxoglutarate and the subsequent addition of the resulting succinic semialdehyde-thiamine pyrophosphate anion to isochorismate to yield 2-succinyl-5-enolpyruvyl-6-hydroxy-3-cyclohexene-1-carboxylate (SEPHCHC). This is 2-succinyl-5-enolpyruvyl-6-hydroxy-3-cyclohexene-1-carboxylate synthase from Shewanella baltica (strain OS155 / ATCC BAA-1091).